Here is a 339-residue protein sequence, read N- to C-terminus: RxLR effector protein SFI4 (339 aa).

Residues 1-24 (MRVLRVTFLWALLLLVAFSASVYA) form the signal peptide. Residues 51-74 (RGLRNSGMKLNDAKDFKGAIAKLR) carry the RxLR-dEER motif. TPR repeat units lie at residues 106-139 (AQIL…VEKI), 190-223 (IEAS…QNGE), 232-265 (AELY…FRQR), and 274-307 (AFSL…AVQI).

This sequence belongs to the RxLR effector family.

It is found in the secreted. The protein localises to the host nucleus. The protein resides in the host cytoplasm. Effector that suppresses flg22-induced post-translational MAP kinase activation in tomato but not in Arabidopsis. The perception of highly conserved pathogen- or microbe-associated molecular patterns (PAMPs/MAMPs), such as flg22, triggers converging signaling pathways recruiting MAP kinase cascades and inducing transcriptional re-programming, yielding a generic antimicrobial response. The protein is RxLR effector protein SFI4 of Phytophthora infestans (strain T30-4) (Potato late blight agent).